The primary structure comprises 142 residues: Hemoglobin cathodic subunit alpha (142 aa).

Serine 1 carries the N-acetylserine modification. Positions serine 1–arginine 142 constitute a Globin domain. Histidine 59 serves as a coordination point for O2. Histidine 88 is a heme b binding site.

Belongs to the globin family. Heterotetramer of two alpha chains and two beta chains.

In terms of biological role, involved in oxygen transport from gills to the various peripheral tissues. This chain is Hemoglobin cathodic subunit alpha, found in Hoplosternum littorale (Hassar).